We begin with the raw amino-acid sequence, 87 residues long: Beta-defensin 109C (87 aa).

An N-terminal signal peptide occupies residues 1 to 22 (MRLHLLLLILLLFSILLSPVRG). Disulfide bonds link Cys31–Cys59, Cys38–Cys53, and Cys43–Cys60.

Belongs to the beta-defensin family.

It localises to the secreted. Functionally, has antibacterial activity. The sequence is that of Beta-defensin 109C (DEFB109C) from Homo sapiens (Human).